Here is a 142-residue protein sequence, read N- to C-terminus: Peptide methionine sulfoxide reductase MsrB (142 aa).

The MsrB domain maps to 2-125 (LKKDKSELTD…NSAAIQFIPY (124 aa)). The active-site Nucleophile is the C114.

It belongs to the MsrB Met sulfoxide reductase family.

The catalysed reaction is L-methionyl-[protein] + [thioredoxin]-disulfide + H2O = L-methionyl-(R)-S-oxide-[protein] + [thioredoxin]-dithiol. This chain is Peptide methionine sulfoxide reductase MsrB, found in Staphylococcus aureus (strain Mu3 / ATCC 700698).